The primary structure comprises 114 residues: Large ribosomal subunit protein uL22 (114 aa).

This sequence belongs to the universal ribosomal protein uL22 family. As to quaternary structure, part of the 50S ribosomal subunit.

Functionally, this protein binds specifically to 23S rRNA; its binding is stimulated by other ribosomal proteins, e.g. L4, L17, and L20. It is important during the early stages of 50S assembly. It makes multiple contacts with different domains of the 23S rRNA in the assembled 50S subunit and ribosome. In terms of biological role, the globular domain of the protein is located near the polypeptide exit tunnel on the outside of the subunit, while an extended beta-hairpin is found that lines the wall of the exit tunnel in the center of the 70S ribosome. The protein is Large ribosomal subunit protein uL22 of Streptococcus gordonii (strain Challis / ATCC 35105 / BCRC 15272 / CH1 / DL1 / V288).